The primary structure comprises 196 residues: Large ribosomal subunit protein uL5 (196 aa).

Belongs to the universal ribosomal protein uL5 family. As to quaternary structure, part of the 50S ribosomal subunit; part of the 5S rRNA/L5/L18/L25 subcomplex. Contacts the 5S rRNA and the P site tRNA. Forms a bridge to the 30S subunit in the 70S ribosome.

In terms of biological role, this is one of the proteins that bind and probably mediate the attachment of the 5S RNA into the large ribosomal subunit, where it forms part of the central protuberance. In the 70S ribosome it contacts protein S13 of the 30S subunit (bridge B1b), connecting the 2 subunits; this bridge is implicated in subunit movement. Contacts the P site tRNA; the 5S rRNA and some of its associated proteins might help stabilize positioning of ribosome-bound tRNAs. In Rhodopirellula baltica (strain DSM 10527 / NCIMB 13988 / SH1), this protein is Large ribosomal subunit protein uL5.